The following is an 86-amino-acid chain: Neurotoxin homolog NL1 (86 aa).

The signal sequence occupies residues 1–21 (MKTLLLTLVVVTMVCMDLGYT). 4 disulfide bridges follow: Cys-24–Cys-45, Cys-38–Cys-62, Cys-66–Cys-78, and Cys-79–Cys-84.

It belongs to the three-finger toxin family. Short-chain subfamily. Orphan group VIII (haditoxin) sub-subfamily. As to quaternary structure, homodimer; non-covalently linked. In terms of tissue distribution, expressed by the venom gland.

The protein resides in the secreted. Functionally, antagonist of muscle and neuronal nicotinic acetylcholine receptors (nAChR) with highest affinity for neuronal alpha-7/CHRNA7 nAChRs. The polypeptide is Neurotoxin homolog NL1 (Naja atra (Chinese cobra)).